Consider the following 631-residue polypeptide: Phosphomethylpyrimidine synthase (631 aa).

Residues Asn239, Met268, Tyr297, His333, Ser353–Gly355, Asp394–Arg397, and Glu433 contribute to the substrate site. Residue His437 participates in Zn(2+) binding. A substrate-binding site is contributed by Tyr460. His501 contacts Zn(2+). [4Fe-4S] cluster is bound by residues Cys581, Cys584, and Cys589.

It belongs to the ThiC family. As to quaternary structure, homodimer. Requires [4Fe-4S] cluster as cofactor.

It catalyses the reaction 5-amino-1-(5-phospho-beta-D-ribosyl)imidazole + S-adenosyl-L-methionine = 4-amino-2-methyl-5-(phosphooxymethyl)pyrimidine + CO + 5'-deoxyadenosine + formate + L-methionine + 3 H(+). It participates in cofactor biosynthesis; thiamine diphosphate biosynthesis. Its function is as follows. Catalyzes the synthesis of the hydroxymethylpyrimidine phosphate (HMP-P) moiety of thiamine from aminoimidazole ribotide (AIR) in a radical S-adenosyl-L-methionine (SAM)-dependent reaction. This Salmonella agona (strain SL483) protein is Phosphomethylpyrimidine synthase.